The chain runs to 280 residues: Shikimate dehydrogenase (NADP(+)) (280 aa).

Residues 15–17 (SLS) and threonine 62 contribute to the shikimate site. Catalysis depends on lysine 66, which acts as the Proton acceptor. Shikimate contacts are provided by asparagine 88 and aspartate 104. NADP(+)-binding positions include 128–132 (GAGGA), 151–156 (NRTEGR), and isoleucine 222. Position 224 (tyrosine 224) interacts with shikimate. Position 245 (glycine 245) interacts with NADP(+).

This sequence belongs to the shikimate dehydrogenase family. In terms of assembly, homodimer.

The enzyme catalyses shikimate + NADP(+) = 3-dehydroshikimate + NADPH + H(+). It participates in metabolic intermediate biosynthesis; chorismate biosynthesis; chorismate from D-erythrose 4-phosphate and phosphoenolpyruvate: step 4/7. Involved in the biosynthesis of the chorismate, which leads to the biosynthesis of aromatic amino acids. Catalyzes the reversible NADPH linked reduction of 3-dehydroshikimate (DHSA) to yield shikimate (SA). This chain is Shikimate dehydrogenase (NADP(+)), found in Methanosarcina barkeri (strain Fusaro / DSM 804).